Here is a 341-residue protein sequence, read N- to C-terminus: Phosphoribosylformylglycinamidine cyclo-ligase (341 aa).

Belongs to the AIR synthase family.

The protein localises to the cytoplasm. The catalysed reaction is 2-formamido-N(1)-(5-O-phospho-beta-D-ribosyl)acetamidine + ATP = 5-amino-1-(5-phospho-beta-D-ribosyl)imidazole + ADP + phosphate + H(+). The protein operates within purine metabolism; IMP biosynthesis via de novo pathway; 5-amino-1-(5-phospho-D-ribosyl)imidazole from N(2)-formyl-N(1)-(5-phospho-D-ribosyl)glycinamide: step 2/2. The polypeptide is Phosphoribosylformylglycinamidine cyclo-ligase (Xanthomonas oryzae pv. oryzae (strain MAFF 311018)).